Here is a 140-residue protein sequence, read N- to C-terminus: Large ribosomal subunit protein bL17 (140 aa).

The protein belongs to the bacterial ribosomal protein bL17 family. In terms of assembly, part of the 50S ribosomal subunit. Contacts protein L32.

The polypeptide is Large ribosomal subunit protein bL17 (Rhizorhabdus wittichii (strain DSM 6014 / CCUG 31198 / JCM 15750 / NBRC 105917 / EY 4224 / RW1) (Sphingomonas wittichii)).